Reading from the N-terminus, the 269-residue chain is Bis(5'-nucleosyl)-tetraphosphatase, symmetrical (269 aa).

The protein belongs to the Ap4A hydrolase family.

The catalysed reaction is P(1),P(4)-bis(5'-adenosyl) tetraphosphate + H2O = 2 ADP + 2 H(+). In terms of biological role, hydrolyzes diadenosine 5',5'''-P1,P4-tetraphosphate to yield ADP. The sequence is that of Bis(5'-nucleosyl)-tetraphosphatase, symmetrical from Vibrio vulnificus (strain CMCP6).